The sequence spans 1440 residues: Glucose transporter type 1 (1440 aa).

An N-terminal signal peptide occupies residues 1-23 (MAFLCAPGLTFFLTYSIFSAVLG). Over 24-67 (MLQFGYNTGVINAPEKNIENFMKDVYKDRYGEDISEEFIQQLYS) the chain is Cytoplasmic. A helical membrane pass occupies residues 68–88 (VAVSIFAIGGMLGGFSGGWMA). Topologically, residues 89-95 (NRFGRKG) are extracellular. A helical transmembrane segment spans residues 96 to 116 (GLLLNNVLGIAGACLMGFTKV). The Cytoplasmic segment spans residues 117 to 127 (SHSYEMLFLGR). Residues 128-148 (FIIGVNCGLNTSLVPMYISEI) form a helical membrane-spanning segment. Residues 149–162 (APLNLRGGLGTVNQ) are Extracellular-facing. Residue Gln162 participates in D-glucose binding. Residues 163–183 (LAVTVGLLLSQVLGIEQILGT) traverse the membrane as a helical segment. At 184–186 (NEG) the chain is on the cytoplasmic side. The chain crosses the membrane as a helical span at residues 187-207 (WPILLGLAICPAILQLILLPV). The Extracellular segment spans residues 208–272 (CPESPRYLLI…LICSPTLRPP (65 aa)). The chain crosses the membrane as a helical span at residues 273 to 293 (LIIGIVMQLSQQFSGINAVFY). D-glucose-binding positions include 283–284 (QQ) and Asn289. The Cytoplasmic segment spans residues 294–310 (YSTSLFMSSGLTEESAK). The chain crosses the membrane as a helical span at residues 311-331 (FATIGIGAIMVVMTLVSIPLM). Residues 332 to 339 (DRTGRRTL) lie on the Extracellular side of the membrane. The helical transmembrane segment at 340–360 (HLYGLGGMFIFSIFITISFLI) threads the bilayer. Residues 361 to 372 (KEMIDWMSYLSV) lie on the Cytoplasmic side of the membrane. A helical transmembrane segment spans residues 373–393 (VATLGFVVFFAVGPGSIPWMI). Trp391 provides a ligand contact to D-glucose. The Extracellular segment spans residues 394–405 (TAELFSQGPRPS). A helical transmembrane segment spans residues 406-426 (AMAIAVLVNWMANFVVGIGFP). Residues 427 to 429 (SMK) are Cytoplasmic-facing. Residues 430–450 (TALENYTFLPFSVFLAIFWIF) traverse the membrane as a helical segment. Topologically, residues 451 to 534 (TYKKVPETKN…GPYPLSDSTN (84 aa)) are extracellular. N-linked (GlcNAc...) asparagine glycosylation is found at Asn460 and Asn480. Residues 535–555 (LLGPGSSSYGPGGVLGLAGSG) traverse the membrane as a helical segment. The Cytoplasmic portion of the chain corresponds to 556-1440 (SGLGGQCYTN…RKYTDFLRKK (885 aa)). Disordered regions lie at residues 628–708 (ERFL…SRYA), 725–808 (QANP…HSVM), 966–987 (APEG…SELP), 1000–1083 (FLAD…GSYH), 1304–1330 (LEGA…PLTH), and 1380–1401 (ANSP…GHHV). The segment covering 669 to 678 (PPDSASVRST) has biased composition (polar residues). A compositionally biased stretch (low complexity) spans 686-704 (QPQQVHHQQQQVHHQQQHQ). Positions 730–739 (QAPPQQPAPP) are enriched in pro residues. Positions 754 to 789 (CQQRKHSHSPHHSRHTSPHSHHHHSHHSRHSRRSRR) are enriched in basic residues. Low complexity predominate over residues 1313-1330 (STTSEHSSSLPSPQPLTH).

The protein belongs to the major facilitator superfamily. Sugar transporter (TC 2.A.1.1) family. Glucose transporter subfamily.

Its subcellular location is the membrane. Functionally, facilitative glucose transporter. The polypeptide is Glucose transporter type 1 (Glut1) (Drosophila melanogaster (Fruit fly)).